Reading from the N-terminus, the 471-residue chain is UDP-N-acetylmuramate--L-alanine ligase (471 aa).

114-120 (GTHGKTT) lines the ATP pocket.

Belongs to the MurCDEF family.

It is found in the cytoplasm. The catalysed reaction is UDP-N-acetyl-alpha-D-muramate + L-alanine + ATP = UDP-N-acetyl-alpha-D-muramoyl-L-alanine + ADP + phosphate + H(+). It functions in the pathway cell wall biogenesis; peptidoglycan biosynthesis. Functionally, cell wall formation. The protein is UDP-N-acetylmuramate--L-alanine ligase of Methylobacterium nodulans (strain LMG 21967 / CNCM I-2342 / ORS 2060).